A 499-amino-acid chain; its full sequence is Cytochrome P450 71A27 (499 aa).

Residues 3 to 23 (MILISLCLTTLLAFLFLKPLL) traverse the membrane as a helical segment. Cysteine 438 is a binding site for heme.

Belongs to the cytochrome P450 family. Heme serves as cofactor.

Its subcellular location is the membrane. This chain is Cytochrome P450 71A27 (CYP71A27), found in Arabidopsis thaliana (Mouse-ear cress).